Consider the following 493-residue polypeptide: Activin receptor type-1C (493 aa).

The N-terminal stretch at 1-20 is a signal peptide; that stretch reads MTRALCSALRQALLLLAAAA. Residues 22-113 lie on the Extracellular side of the membrane; sequence LSPGLKCVCL…PNAPKLGPME (92 aa). The helical transmembrane segment at 114–134 threads the bilayer; sequence LAIIITVPVCLLSIAAMLTVW. The Cytoplasmic portion of the chain corresponds to 135–493; sequence ACQGRQCSYR…QLCVKEDCKA (359 aa). Residues 165 to 194 enclose the GS domain; sequence KTLKDLIYDVTASGSGSGLPLLVQRTIART. A Protein kinase domain is found at 195 to 485; it reads IVLQEIVGKG…LRIKKTISQL (291 aa). ATP contacts are provided by residues 201-209 and Lys-222; that span reads VGKGRFGEV. Asp-323 (proton acceptor) is an active-site residue.

It belongs to the protein kinase superfamily. TKL Ser/Thr protein kinase family. TGFB receptor subfamily. Binds the type 2 receptor protein ACVR2A. The cofactor is Mg(2+). Mn(2+) serves as cofactor. As to expression, present in pancreas, heart, colon, small intestine, ovary and the hippocampus, medulla oblongata and putamen of the brain. Isoform 1, isoform 2, isoform 3 and isoform 4 are all expressed in the placenta throughout pregnancy.

Its subcellular location is the membrane. The enzyme catalyses L-threonyl-[receptor-protein] + ATP = O-phospho-L-threonyl-[receptor-protein] + ADP + H(+). It catalyses the reaction L-seryl-[receptor-protein] + ATP = O-phospho-L-seryl-[receptor-protein] + ADP + H(+). In terms of biological role, serine/threonine protein kinase which forms a receptor complex on ligand binding. The receptor complex consists of 2 type II and 2 type I transmembrane serine/threonine kinases. Type II receptors phosphorylate and activate type I receptors which autophosphorylate, then bind and activate SMAD transcriptional regulators, SMAD2 and SMAD3. Receptor for activin AB, activin B, activin E and NODAL. Upon NODAL binding, activation results in increased apoptosis and reduced proliferation through suppression of AKT signaling and the activation of Smad2-dependent signaling pathway in pancreatic beta-cells, trophoblasts, epithelial or neuronal cells. Acts as a positive regulator for macrophage activation partially through down-regulation of PPARG expression. This is Activin receptor type-1C from Homo sapiens (Human).